A 507-amino-acid chain; its full sequence is Protein FAM221B (507 aa).

Disordered regions lie at residues 1–100, 154–310, and 486–507; these read MEAD…SAQS, LLSP…ESRP, and ETKR…HRPF. Over residues 88 to 100 the composition is skewed to polar residues; that stretch reads NLPSTPSQSSAQS. Residues 167–177 show a composition bias toward acidic residues; it reads SISDVQEEPLE. Residues 182–193 show a composition bias toward polar residues; the sequence is ADISETEYSISD. Acidic residues-rich tracts occupy residues 208–222 and 270–281; these read PESE…EEPL and SADEEEAEEEEL. Ser-270 carries the phosphoserine modification.

This sequence belongs to the FAM221 family.

The sequence is that of Protein FAM221B (Fam221b) from Rattus norvegicus (Rat).